The chain runs to 30 residues: Kalata-B14 (30 aa).

Residues 1 to 30 (GLPVCGESCFGGTCNTPGCACDPWPVCTRD) constitute a cross-link (cyclopeptide (Gly-Asp)). Intrachain disulfides connect cysteine 5–cysteine 19, cysteine 9–cysteine 21, and cysteine 14–cysteine 27.

This is a cyclic peptide.

Probably participates in a plant defense mechanism. The chain is Kalata-B14 from Oldenlandia affinis.